A 133-amino-acid polypeptide reads, in one-letter code: Large ribosomal subunit protein uL22 (133 aa).

Belongs to the universal ribosomal protein uL22 family. As to quaternary structure, part of the 50S ribosomal subunit.

In terms of biological role, this protein binds specifically to 23S rRNA; its binding is stimulated by other ribosomal proteins, e.g. L4, L17, and L20. It is important during the early stages of 50S assembly. It makes multiple contacts with different domains of the 23S rRNA in the assembled 50S subunit and ribosome. Functionally, the globular domain of the protein is located near the polypeptide exit tunnel on the outside of the subunit, while an extended beta-hairpin is found that lines the wall of the exit tunnel in the center of the 70S ribosome. This chain is Large ribosomal subunit protein uL22, found in Aquifex pyrophilus.